A 132-amino-acid chain; its full sequence is Translation initiation factor 2 subunit beta (132 aa).

A disordered region spans residues 1–30; the sequence is MDYEEQLDRAMDEKPDVTGSETRFEVPDPN.

It belongs to the eIF-2-beta/eIF-5 family. Heterotrimer composed of an alpha, a beta and a gamma chain.

Its function is as follows. eIF-2 functions in the early steps of protein synthesis by forming a ternary complex with GTP and initiator tRNA. This chain is Translation initiation factor 2 subunit beta, found in Halobacterium salinarum (strain ATCC 29341 / DSM 671 / R1).